We begin with the raw amino-acid sequence, 152 residues long: MSTLVTCSLPGAVTTHASTRRFGGSQFQTSQASCISFKREVSAKAVLRSVRCNATQTQSAQRKSSTATVKRSDPKGKIQGPKLDDGSGGFPPFRFGKGGGGGGGGGGGSNYFGGFLLFTCVLLLDYLKEFEKNLIARRQRAGYDANNDMFQQ.

Residues 1-52 constitute a mitochondrion transit peptide; the sequence is MSTLVTCSLPGAVTTHASTRRFGGSQFQTSQASCISFKREVSAKAVLRSVRC. The span at 52 to 69 shows a compositional bias: polar residues; sequence CNATQTQSAQRKSSTATV. Residues 52–99 are disordered; the sequence is CNATQTQSAQRKSSTATVKRSDPKGKIQGPKLDDGSGGFPPFRFGKGG.

It is found in the mitochondrion. Functionally, restores fertility in rice varieties with LD-type cytoplasmic male sterility (CMS). CMS is caused by genetic incompatibility between nuclei and mitochondria within male reproductive organs. Corresponds to the functional allele of RF2, which is dependent of the presence of Ile-78 in the japonica cultivars Fukuyama and Owarihatamochi (AC F1SZ42), and indica cultivar Kasalath (AC F1SZ41). Non-functional RF2 alleles are found in japonica cultivars Taichung 65 and Nipponbare (AC F1SZ44), where Ile-78 is replaced by Thr-78. The protein is Protein FERTILITY RESTORER RF2, mitochondrial of Oryza sativa subsp. japonica (Rice).